A 416-amino-acid polypeptide reads, in one-letter code: MSLDVRTITPSESAEWMRAVSTGFLTAGTPSEELVADRFAGADLSRTQGAFEAGRCVATFRSFAQELTVVGGATVAADAISGVTVTPTHRRRGLLSRMMATDLAAAKERGEPVASLIAAEYPIYGRYGFGPAAWTSVWEVSVYRAGLDARRSGQPADGGRIEMVDGADVRKLGPEVHGALAARQPGVVTRDERWWRQRTGAAPSSAHEKWTEPFYVVHRAADGTVDGLMTYGTDDTWGDAKQPLNTASVRDMIALNPAAERALWHYLCSIDWITTIRSGYRAPDDLLPLLLPDPRAARMITNADWLWLRMLDVPRALEARTYGTEASLVLEVRDDAGLAGGRFLLDASTGGARCVSTTRSADLVLGVAELATLYLGDESVRRLVDLGRAEESRAGAATTADAVFRTGRRPWCPDVF.

The N-acetyltransferase domain maps to 3 to 150 (LDVRTITPSE…SVYRAGLDAR (148 aa)). Acetyl-CoA-binding positions include 83-85 (VTV) and 91-96 (RRGLLS). Catalysis depends on tyrosine 124, which acts as the Proton donor. The Proton acceptor; via carboxylate role is filled by phenylalanine 416.

This sequence belongs to the acetyltransferase Eis family. As to quaternary structure, homohexamer; trimer of dimers.

This is an uncharacterized protein from Streptomyces griseus subsp. griseus (strain JCM 4626 / CBS 651.72 / NBRC 13350 / KCC S-0626 / ISP 5235).